Reading from the N-terminus, the 565-residue chain is uncharacterized protein (565 aa).

Residues 1–21 (MKIPSQQVLLALPLLASPAQS) form the signal peptide. Asn-46 and Asn-88 each carry an N-linked (GlcNAc...) asparagine glycan. Residues 118 to 302 (QGIVPYYSVS…TSVTYKTHPK (185 aa)) form the FAD-binding PCMH-type domain. Position 155 is a pros-8alpha-FAD histidine (His-155). N-linked (GlcNAc...) asparagine glycosylation is found at Asn-191, Asn-314, Asn-364, Asn-371, and Asn-484.

The protein belongs to the oxygen-dependent FAD-linked oxidoreductase family. FAD is required as a cofactor.

It is found in the secreted. This is an uncharacterized protein from Arthroderma benhamiae (strain ATCC MYA-4681 / CBS 112371) (Trichophyton mentagrophytes).